A 349-amino-acid chain; its full sequence is Replication-associated protein (349 aa).

Residues 8-116 (RLNAKNYFLT…DGDTVEWGEF (109 aa)) form the CRESS-DNA virus Rep endonuclease domain. An RCR-1 motif is present at residues 15–18 (FLTY). Glutamate 49, histidine 57, and histidine 59 together coordinate a divalent metal cation. Residues 57–59 (HLH) carry the RCR-2 motif. The For DNA cleavage activity role is filled by tyrosine 103. An RCR-3 motif is present at residues 103-106 (YIDK). Position 107 (aspartate 107) interacts with a divalent metal cation. Positions 143–153 (AEEALQIIKEE) are binding to RBR1. The tract at residues 156–176 (QHFFLQFHNIVSNANRIFQTP) is oligomerization. 221–228 (GPSRTGKT) provides a ligand contact to ATP.

It belongs to the geminiviridae Rep protein family. In terms of assembly, homooligomer. Interacts with the replication enhancer protein (REn). Interacts with host retinoblastoma-related protein 1 (RBR1), and may thereby induce the transcription of host replicative enzymes even if the cell is not dividing anymore. Interacts with host PCNA. Interacts with host SCE1 protein. The cofactor is Mg(2+). Mn(2+) is required as a cofactor.

Its subcellular location is the host nucleus. In terms of biological role, essential for the replication of viral ssDNA. The closed circular ssDNA genome is first converted to a superhelical dsDNA. Rep binds a specific region at the genome origin of replication. It introduces an endonucleolytic nick within the conserved sequence 5'-TAATATTAC-3' in the intergenic region of the genome present in all geminiviruses, thereby initiating the rolling circle replication (RCR). Following cleavage, binds covalently to the 5'-phosphate of DNA as a tyrosyl ester. The cleavage gives rise to a free 3'-OH that serves as a primer for the cellular DNA polymerase. The polymerase synthesizes the (+) strand DNA by rolling circle mechanism. After one round of replication, a Rep-catalyzed nucleotidyl transfer reaction releases a circular single-stranded virus genome, thereby terminating the replication. Displays origin-specific DNA cleavage, nucleotidyl transferase, ATPase and helicase activities. In Capsicum annuum (Capsicum pepper), this protein is Replication-associated protein.